The following is a 2126-amino-acid chain: Phthioceranic/hydroxyphthioceranic acid synthase (2126 aa).

One can recognise a Ketosynthase family 3 (KS3) domain in the interval 24 to 447 (VTPVAVIGMA…GTNVHAVVEQ (424 aa)). The active-site Acyl-thioester intermediate; for beta-ketoacyl synthase activity is the cysteine 196. Active-site for beta-ketoacyl synthase activity residues include histidine 331 and histidine 367. Residues 449 to 549 (PQTEAQPHAA…VYQPAVGQDD (101 aa)) are linker domain (LD). The tract at residues 550-849 (RGPVWLFSGQ…VAALAGMRRE (300 aa)) is acyltransferase (AT). Serine 641 (acyl-ester intermediate; for acyltransferase activity) is an active-site residue. The segment at 909 to 1191 (STVAVHPLLG…LAVCGLRIGT (283 aa)) is dehydratase (DH). The interval 914–1032 (HPLLGAHVRL…RRASAVLQQV (119 aa)) is N-terminal hotdog fold. Residues 914–1198 (HPLLGAHVRL…IGTGVSERDK (285 aa)) enclose the PKS/mFAS DH domain. The active-site Proton acceptor; for dehydratase activity is histidine 947. Residues 1051–1198 (PCRVDGEDLR…IGTGVSERDK (148 aa)) are C-terminal hotdog fold. Aspartate 1115 (proton donor; for dehydratase activity) is an active-site residue. The tract at residues 1227-1398 (KWLLISDCAA…SEEDETAWRD (172 aa)) is pseudo beta-ketoacyl reductase (PsiKR). The tract at residues 1426–1750 (SGMRLQIRTP…EHTGKLVLHI (325 aa)) is enoylreductase (ER). The interval 1772-2019 (GSYIITGGLG…AERSRFFEVF (248 aa)) is beta-ketoacyl reductase (KR). Residues 1780–1783 (LGGL), 1803–1806 (SRTQ), 1831–1832 (DI), and 1904–1905 (FS) contribute to the NADP(+) site. Residues 2040 to 2126 (DEWPARLRQL…DAPAAALSSQ (87 aa)) enclose the Carrier domain. The residue at position 2075 (serine 2075) is an O-(pantetheine 4'-phosphoryl)serine.

Pantetheine 4'-phosphate serves as cofactor.

It catalyses the reaction hexadecanoyl-[(hydroxy)phthioceranic acid synthase] + 7 (S)-methylmalonyl-CoA + 14 NADPH + 21 H(+) = C37-phthioceranyl-[(hydroxy)phthioceranic acid synthase] + 7 CO2 + 14 NADP(+) + 7 CoA + 7 H2O. The enzyme catalyses hexadecanoyl-[(hydroxy)phthioceranic acid synthase] + 8 (S)-methylmalonyl-CoA + 16 NADPH + 24 H(+) = C40-phthioceranyl-[(hydroxy)phthioceranic acid synthase] + 8 CO2 + 16 NADP(+) + 8 CoA + 8 H2O. This is Phthioceranic/hydroxyphthioceranic acid synthase (pks2) from Mycobacterium bovis (strain BCG / Pasteur 1173P2).